The following is a 212-amino-acid chain: Glycerol-3-phosphate acyltransferase (212 aa).

The next 5 helical transmembrane spans lie at 9–29 (AACL…GYLL), 67–87 (GPAL…VLLA), 95–115 (WLQV…VWLG), 128–148 (MFLG…MAVI), and 168–190 (LMVV…LMVL).

This sequence belongs to the PlsY family. Probably interacts with PlsX.

It is found in the cell inner membrane. The catalysed reaction is an acyl phosphate + sn-glycerol 3-phosphate = a 1-acyl-sn-glycero-3-phosphate + phosphate. It functions in the pathway lipid metabolism; phospholipid metabolism. Its function is as follows. Catalyzes the transfer of an acyl group from acyl-phosphate (acyl-PO(4)) to glycerol-3-phosphate (G3P) to form lysophosphatidic acid (LPA). This enzyme utilizes acyl-phosphate as fatty acyl donor, but not acyl-CoA or acyl-ACP. The sequence is that of Glycerol-3-phosphate acyltransferase from Parasynechococcus marenigrum (strain WH8102).